A 41-amino-acid chain; its full sequence is MQVLSSLKTAKQRHRDCQIVRRRGKVYVICKSNPRFKARQR.

It belongs to the bacterial ribosomal protein bL36 family.

The protein is Large ribosomal subunit protein bL36B of Neisseria meningitidis serogroup B (strain ATCC BAA-335 / MC58).